The primary structure comprises 40 residues: Spodomicin (40 aa).

Intrachain disulfides connect cysteine 6–cysteine 20, cysteine 10–cysteine 32, and cysteine 21–cysteine 39.

Monomer. Contains three disulfide bonds. Hemolymph.

It localises to the secreted. Fungicide. This is Spodomicin from Spodoptera littoralis (Egyptian cotton leafworm).